The sequence spans 289 residues: 4-diphosphocytidyl-2-C-methyl-D-erythritol kinase (289 aa).

Residue K10 is part of the active site. 94–104 provides a ligand contact to ATP; it reads PVAAGLAGGSS. D136 is a catalytic residue.

It belongs to the GHMP kinase family. IspE subfamily.

The catalysed reaction is 4-CDP-2-C-methyl-D-erythritol + ATP = 4-CDP-2-C-methyl-D-erythritol 2-phosphate + ADP + H(+). Its pathway is isoprenoid biosynthesis; isopentenyl diphosphate biosynthesis via DXP pathway; isopentenyl diphosphate from 1-deoxy-D-xylulose 5-phosphate: step 3/6. Catalyzes the phosphorylation of the position 2 hydroxy group of 4-diphosphocytidyl-2C-methyl-D-erythritol. This Bacillus anthracis protein is 4-diphosphocytidyl-2-C-methyl-D-erythritol kinase.